The chain runs to 143 residues: Ribosome maturation factor RimP (143 aa).

It belongs to the RimP family.

It localises to the cytoplasm. Functionally, required for maturation of 30S ribosomal subunits. This is Ribosome maturation factor RimP from Borrelia recurrentis (strain A1).